The sequence spans 281 residues: Imidazoleglycerol-phosphate dehydratase, chloroplastic (281 aa).

Residues 1–85 (MELYAASHSL…TSLPFHPETR (85 aa)) constitute a chloroplast transit peptide. Residues glutamate 95, 121–129 (HMLDQLASH), 147–151 (HHTNE), arginine 173, and arginine 195 each bind substrate. Mn(2+) is bound by residues histidine 121, histidine 147, histidine 148, and glutamate 151. Mn(2+) contacts are provided by histidine 219, histidine 243, histidine 244, and glutamate 247. Substrate contacts are provided by residues 243–251 (HHIIEATFK) and 273–275 (SSK).

It belongs to the imidazoleglycerol-phosphate dehydratase family. It depends on Mn(2+) as a cofactor.

The protein localises to the plastid. It is found in the chloroplast. It carries out the reaction D-erythro-1-(imidazol-4-yl)glycerol 3-phosphate = 3-(imidazol-4-yl)-2-oxopropyl phosphate + H2O. It participates in amino-acid biosynthesis; L-histidine biosynthesis; L-histidine from 5-phospho-alpha-D-ribose 1-diphosphate: step 6/9. The polypeptide is Imidazoleglycerol-phosphate dehydratase, chloroplastic (Pisum sativum (Garden pea)).